We begin with the raw amino-acid sequence, 563 residues long: Efflux pump notK (563 aa).

The segment at 1-32 (MTKDEDSGTTDGGYSTPDIAVQEKQDQPPAPE) is disordered. 14 consecutive transmembrane segments (helical) span residues 48 to 68 (IFLS…AIPG), 78 to 98 (DVGW…PMWG), 108 to 128 (LVYL…AAAP), 138 to 158 (ALQG…ISYV), 165 to 185 (AMLI…GPLL), 197 to 217 (WCFW…VLFF), 239 to 259 (LPGF…LQWG), 270 to 290 (VIAT…VEWI), 312 to 332 (LYGW…PIYF), 345 to 365 (VNSL…GFLI), 374 to 394 (YEFA…TLDI), 406 to 426 (VIFG…LESF), 438 to 458 (VMLM…QSIF), and 509 to 529 (VFAF…AIPF). Residues 538–563 (GPSNGQEEEEGKKDGPAEKKEDEVAV) are disordered. Positions 547–563 (EGKKDGPAEKKEDEVAV) are enriched in basic and acidic residues.

The protein belongs to the major facilitator superfamily. TCR/Tet family.

The protein localises to the cell membrane. Functionally, efflux pump; part of the gene cluster that mediates the biosynthesis of notoamide, a fungal indole alkaloid that belongs to a family of natural products containing a characteristic bicyclo[2.2.2]diazaoctane core. The sequence is that of Efflux pump notK from Aspergillus sp. (strain MF297-2).